Consider the following 809-residue polypeptide: MANVSKKVSWSGRDLDDDEAAPLLRRAPRLGVPAGEAAPLLNGAGPAAARASPHSAFFRIGQLSSVELDDELLDPDMDPPHPFPREIPHNEKLLSLKYESLDYDNSENQLFLEEERRINHTAFRTVEIKRWVICAMVGILTGLVACFIDIVVEKLAGLKYRLVKDNIDRFTEHGGLSFSLLLWAALNAAFVLLGSTIVAFIEPVAAGSGIPQIKCFLNGVKIPHVVRLKTLVIKVSGVILSVVGGLAVGKEGPMIHSGSVIAAGISQGRSTSLKRDFKIFEYFRRDTEKRDFVSAGAAAGVSAAFGAPVGGVLFSLEEGASFWNQFLTWRIFFASMISTFTLNFVLSIYHGNAWDLSSPGLINFGRFDTETMVYVIHEIPIFIAMGVVGGILGAVFNALNYWLTMFRIRYVHRPCLQVVEATLVAAVTATAAFVLIYSSRDCQPLRGSSVSYPLQLFCADGEYNSMAVAFFNTPEKSVVSLFHDPPGSYNPMTLGLFTLVYFFLACWTYGLTVSAGVFIPSLLIGAAWGRLFGISLSYITGAAVWADPGKYALMGAAAQLGGIVRMTLSLTVIMMEATSSVTYGFPIMLVLMTAKIVGDVFIEGLYDMHIQLQSVPFLHWEAPVTSHSLTAREVMSTPVTCLRRREKVGVIVDVLSSTASNHNGFPVVEDADGTQPARLQGLILRSQLIVLLKHKVFVERSSMGLLRRRLRLKDFRDAYPRFPPIQSIHVSQDERECTMDLSEFMNPSPYTVPQEASLPRVFKLFRALGLRHLVVVDNCNQVVGLVTRKDLARYRLGKGGLEELSLAQT.

Over 1–130 (MANVSKKVSW…TAFRTVEIKR (130 aa)) the chain is Cytoplasmic. Residues Ser9 and Ser64 each carry the phosphoserine modification. 2 helical membrane-spanning segments follow: residues 131-163 (WVIC…YRLV) and 178-201 (FSLL…VAFI). A Selectivity filter part_1 motif is present at residues 207 to 211 (GSGIP). Ser208 is a chloride binding site. Positions 210 to 217 (IPQIKCFL) form an intramembrane region, helical. The next 2 membrane-spanning stretches (helical) occupy residues 227-245 (RLKT…VVGG) and 251-268 (EGPM…ISQG). The Selectivity filter part_2 signature appears at 249-253 (GKEGP). 2 intramembrane regions (helical) span residues 292–304 (FVSA…VSAA) and 308–316 (PVGGVLFSL). Helical transmembrane passes span 326–345 (FLTW…LNFV), 379–409 (IPIF…FRIR), 414–436 (PCLQ…FVLI), 491–511 (PMTL…TYGL), and 516–539 (GVFI…LSYI). A Selectivity filter part_3 motif is present at residues 516–520 (GVFIP). Phe518 provides a ligand contact to chloride. The helical intramembrane region spans 549-563 (GKYALMGAAAQLGGI). The segment at residues 564–566 (VRM) is an intramembrane region (note=Loop between two helices). Residues 567–578 (TLSLTVIMMEAT) constitute an intramembrane region (helical). An intramembrane region (note=Loop between two helices) is located at residues 579 to 582 (SSVT). The helical transmembrane segment at 583 to 601 (YGFPIMLVLMTAKIVGDVF) threads the bilayer. Over 602-809 (IEGLYDMHIQ…GLEELSLAQT (208 aa)) the chain is Cytoplasmic. Tyr606 contacts chloride. CBS domains are found at residues 635–699 (MSTP…VFVE) and 745–803 (MNPS…GLEE). ATP contacts are provided by residues 662 to 664 (HNG) and 787 to 790 (TRKD). Residue Ser805 is modified to Phosphoserine.

The protein belongs to the chloride channel (TC 2.A.49) family. ClC-7/CLCN7 subfamily. As to quaternary structure, chloride channel 7 are heteromers of alpha (CLCN7) and beta (OSTM1) subunits.

The protein resides in the lysosome membrane. It carries out the reaction 2 chloride(in) + H(+)(out) = 2 chloride(out) + H(+)(in). Its function is as follows. Slowly voltage-gated channel mediating the exchange of chloride ions against protons. Functions as antiporter and contributes to the acidification of the lysosome lumen and may be involved in maintaining lysosomal pH. The CLC channel family contains both chloride channels and proton-coupled anion transporters that exchange chloride or another anion for protons. The presence of conserved gating glutamate residues is typical for family members that function as antiporters. In Bos taurus (Bovine), this protein is H(+)/Cl(-) exchange transporter 7 (CLCN7).